A 179-amino-acid polypeptide reads, in one-letter code: Sec-independent protein translocase protein TatB (179 aa).

A helical membrane pass occupies residues 1-21; sequence MFDLGFWEVLIIMLIGLLILG. Basic and acidic residues-rich tracts occupy residues 75-86 and 94-106; these read KDVEKNARRFEA and TFRDVGRQADDAA. Residues 75-179 are disordered; sequence KDVEKNARRF…QGGGGEEKRQ (105 aa).

This sequence belongs to the TatB family. In terms of assembly, the Tat system comprises two distinct complexes: a TatABC complex, containing multiple copies of TatA, TatB and TatC subunits, and a separate TatA complex, containing only TatA subunits. Substrates initially bind to the TatABC complex, which probably triggers association of the separate TatA complex to form the active translocon.

It is found in the cell inner membrane. Functionally, part of the twin-arginine translocation (Tat) system that transports large folded proteins containing a characteristic twin-arginine motif in their signal peptide across membranes. Together with TatC, TatB is part of a receptor directly interacting with Tat signal peptides. TatB may form an oligomeric binding site that transiently accommodates folded Tat precursor proteins before their translocation. The polypeptide is Sec-independent protein translocase protein TatB (Alkalilimnicola ehrlichii (strain ATCC BAA-1101 / DSM 17681 / MLHE-1)).